A 506-amino-acid chain; its full sequence is Glycerol kinase (506 aa).

Threonine 11 contacts ADP. ATP contacts are provided by threonine 11, serine 12, and serine 13. Position 11 (threonine 11) interacts with sn-glycerol 3-phosphate. ADP is bound at residue arginine 15. Residues arginine 81, glutamate 82, tyrosine 133, and aspartate 242 each coordinate sn-glycerol 3-phosphate. Arginine 81, glutamate 82, tyrosine 133, aspartate 242, and glutamine 243 together coordinate glycerol. The ADP site is built by threonine 264 and glycine 316. Residues threonine 264, glycine 316, glutamine 320, and glycine 421 each coordinate ATP. Glycine 421 and asparagine 425 together coordinate ADP.

It belongs to the FGGY kinase family.

It catalyses the reaction glycerol + ATP = sn-glycerol 3-phosphate + ADP + H(+). The protein operates within polyol metabolism; glycerol degradation via glycerol kinase pathway; sn-glycerol 3-phosphate from glycerol: step 1/1. Its activity is regulated as follows. Inhibited by fructose 1,6-bisphosphate (FBP). Key enzyme in the regulation of glycerol uptake and metabolism. Catalyzes the phosphorylation of glycerol to yield sn-glycerol 3-phosphate. This chain is Glycerol kinase, found in Paracidovorax citrulli (strain AAC00-1) (Acidovorax citrulli).